The sequence spans 285 residues: ATP synthase gamma chain (285 aa).

It belongs to the ATPase gamma chain family. F-type ATPases have 2 components, CF(1) - the catalytic core - and CF(0) - the membrane proton channel. CF(1) has five subunits: alpha(3), beta(3), gamma(1), delta(1), epsilon(1). CF(0) has three main subunits: a, b and c.

The protein resides in the cell membrane. In terms of biological role, produces ATP from ADP in the presence of a proton gradient across the membrane. The gamma chain is believed to be important in regulating ATPase activity and the flow of protons through the CF(0) complex. The protein is ATP synthase gamma chain of Geobacillus kaustophilus (strain HTA426).